The primary structure comprises 111 residues: Probable 4-amino-4-deoxy-L-arabinose-phosphoundecaprenol flippase subunit ArnE (111 aa).

3 consecutive transmembrane segments (helical) span residues leucine 38–leucine 58, leucine 61–alanine 81, and proline 91–alanine 111. The 70-residue stretch at leucine 40–serine 109 folds into the EamA domain.

The protein belongs to the ArnE family. Heterodimer of ArnE and ArnF.

The protein localises to the cell inner membrane. The protein operates within bacterial outer membrane biogenesis; lipopolysaccharide biosynthesis. In terms of biological role, translocates 4-amino-4-deoxy-L-arabinose-phosphoundecaprenol (alpha-L-Ara4N-phosphoundecaprenol) from the cytoplasmic to the periplasmic side of the inner membrane. This Salmonella agona (strain SL483) protein is Probable 4-amino-4-deoxy-L-arabinose-phosphoundecaprenol flippase subunit ArnE.